Reading from the N-terminus, the 147-residue chain is Hemoglobin subunit epsilon (147 aa).

The Globin domain maps to 3 to 147 (HFTAEEKVAI…VAIALGHKYH (145 aa)). Residues Ser14 and Ser51 each carry the phosphoserine modification. Heme b contacts are provided by His64 and His93.

The protein belongs to the globin family. As to quaternary structure, heterotetramer of two alpha chains and two epsilon chains in early embryonic hemoglobin Gower-2; two zeta chains and two epsilon chains in early embryonic hemoglobin Gower-1. Red blood cells.

The epsilon chain is a beta-type chain of early mammalian embryonic hemoglobin. The protein is Hemoglobin subunit epsilon (HBE1) of Cebus kaapori (Ka'apor capuchin).